Here is a 549-residue protein sequence, read N- to C-terminus: Glucose-6-phosphate isomerase (549 aa).

Glu-355 (proton donor) is an active-site residue. Catalysis depends on residues His-386 and Lys-514.

The protein belongs to the GPI family.

It is found in the cytoplasm. The enzyme catalyses alpha-D-glucose 6-phosphate = beta-D-fructose 6-phosphate. Its pathway is carbohydrate biosynthesis; gluconeogenesis. The protein operates within carbohydrate degradation; glycolysis; D-glyceraldehyde 3-phosphate and glycerone phosphate from D-glucose: step 2/4. Catalyzes the reversible isomerization of glucose-6-phosphate to fructose-6-phosphate. The protein is Glucose-6-phosphate isomerase of Salmonella choleraesuis (strain SC-B67).